Here is a 266-residue protein sequence, read N- to C-terminus: MTAQMFTIALLLSLSAIAAAGTIKTAPARTPSTQDDASFPPDGAPVKRFDAFTTGFGHSKRNFDEIDRSGFGFAKKNFDEIDRSGFGFNKRNFDEIDRSGFGFNKRNFDEIDRSGFGFNKRNFDEIDRSGFGFNKRNFDEIDRSGFGFNKRNFDEIDRSGFGFNKRNFDEIDRSGFGFNKRNFDEIDRSGFGFVKRVYVPRYIANLYKRNFDEIDRSGFGFNKRNFDEIDRTGFGFHKRDYDVFPDKRNFDEIDRSGFGFVRRNVE.

An N-terminal signal peptide occupies residues 1–20 (MTAQMFTIALLLSLSAIAAA). Propeptides lie at residues 21 to 46 (GTIK…GAPV), 240 to 246 (DYDVFPD), and 264 to 266 (NVE).

This sequence belongs to the orcokinin family.

It is found in the secreted. In terms of biological role, myotropic peptides that enhance both the frequency and amplitude of spontaneous hindgut contractions. In Procambarus clarkii (Red swamp crayfish), this protein is Orcokinin peptides type B.